The chain runs to 609 residues: UvrABC system protein C (609 aa).

A GIY-YIG domain is found at 16–94; sequence HLPGVYRHLD…IKSLRPRYNI (79 aa). The region spanning 203–238 is the UVR domain; the sequence is REVMDEIEARMLQASTELRFEEAAVLRDQMGSLSKV.

Belongs to the UvrC family. Interacts with UvrB in an incision complex.

It localises to the cytoplasm. Functionally, the UvrABC repair system catalyzes the recognition and processing of DNA lesions. UvrC both incises the 5' and 3' sides of the lesion. The N-terminal half is responsible for the 3' incision and the C-terminal half is responsible for the 5' incision. This is UvrABC system protein C from Bordetella bronchiseptica (strain ATCC BAA-588 / NCTC 13252 / RB50) (Alcaligenes bronchisepticus).